A 424-amino-acid polypeptide reads, in one-letter code: Tyrosine--tRNA ligase (424 aa).

Residue Tyr-37 participates in L-tyrosine binding. A 'HIGH' region motif is present at residues 42–51; sequence PTADSLHLGH. An N6-acetyllysine modification is found at Lys-144. Residues Tyr-175 and Gln-179 each contribute to the L-tyrosine site. Residues 235–239 carry the 'KMSKS' region motif; the sequence is KFGKT. Position 238 (Lys-238) interacts with ATP. Residues 357–414 enclose the S4 RNA-binding domain; it reads ADLMQALVDSELQPSRGQARKTIASNAITINGEKQSDPEYFFKEEDRLFGRFTLLRRG.

This sequence belongs to the class-I aminoacyl-tRNA synthetase family. TyrS type 1 subfamily. As to quaternary structure, homodimer.

The protein localises to the cytoplasm. It catalyses the reaction tRNA(Tyr) + L-tyrosine + ATP = L-tyrosyl-tRNA(Tyr) + AMP + diphosphate + H(+). Its function is as follows. Catalyzes the attachment of tyrosine to tRNA(Tyr) in a two-step reaction: tyrosine is first activated by ATP to form Tyr-AMP and then transferred to the acceptor end of tRNA(Tyr). The protein is Tyrosine--tRNA ligase of Escherichia coli O127:H6 (strain E2348/69 / EPEC).